A 468-amino-acid polypeptide reads, in one-letter code: tRNA (guanine(37)-N(1))-methyltransferase 1 (468 aa).

S-adenosyl-L-methionine-binding positions include His-207, 245–246 (DL), and 273–274 (DA). Residues 301-348 (KEAAVSRGGETNSSGEEIRESNASINEPLGANKKPSGTTKTENGVGKD) form a disordered region. The segment covering 309–325 (GETNSSGEEIRESNASI) has biased composition (polar residues). Residue Asn-380 coordinates S-adenosyl-L-methionine.

Belongs to the class I-like SAM-binding methyltransferase superfamily. TRM5/TYW2 family. In terms of assembly, monomer.

The protein localises to the mitochondrion matrix. The protein resides in the nucleus. It is found in the cytoplasm. The enzyme catalyses guanosine(37) in tRNA + S-adenosyl-L-methionine = N(1)-methylguanosine(37) in tRNA + S-adenosyl-L-homocysteine + H(+). Its function is as follows. Specifically methylates the N1 position of guanosine-37 in various cytoplasmic and mitochondrial tRNAs. Methylation is not dependent on the nature of the nucleoside 5' of the target nucleoside. This is the first step in the biosynthesis of wybutosine (yW), a modified base adjacent to the anticodon of tRNAs and required for accurate decoding. In Arabidopsis thaliana (Mouse-ear cress), this protein is tRNA (guanine(37)-N(1))-methyltransferase 1.